Here is a 545-residue protein sequence, read N- to C-terminus: Esterase-5B (545 aa).

The N-terminal stretch at 1-19 (MYCAKLILLLGCFWISSSA) is a signal peptide. Residues C84 and C103 are joined by a disulfide bond. N113 carries N-linked (GlcNAc...) asparagine glycosylation. Catalysis depends on S207, which acts as the Acyl-ester intermediate. A disulfide bond links C259 and C271. N-linked (GlcNAc...) asparagine glycosylation occurs at N421. Catalysis depends on H467, which acts as the Charge relay system. Residue N507 is glycosylated (N-linked (GlcNAc...) asparagine). The cysteines at positions 515 and 536 are disulfide-linked.

Belongs to the type-B carboxylesterase/lipase family. As to quaternary structure, homodimer.

Its subcellular location is the secreted. It carries out the reaction a carboxylic ester + H2O = an alcohol + a carboxylate + H(+). This is Esterase-5B (Est-5B) from Drosophila persimilis (Fruit fly).